We begin with the raw amino-acid sequence, 608 residues long: Aspartate--tRNA(Asp/Asn) ligase (608 aa).

Residue glutamate 187 coordinates L-aspartate. The tract at residues 211–214 (QQFK) is aspartate. Arginine 233 and histidine 461 together coordinate L-aspartate. 233–235 (RDE) contributes to the ATP binding site. Glutamate 495 provides a ligand contact to ATP. Arginine 502 contacts L-aspartate. 547–550 (GLDR) contacts ATP.

It belongs to the class-II aminoacyl-tRNA synthetase family. Type 1 subfamily. As to quaternary structure, homodimer.

The protein localises to the cytoplasm. The catalysed reaction is tRNA(Asx) + L-aspartate + ATP = L-aspartyl-tRNA(Asx) + AMP + diphosphate. In terms of biological role, aspartyl-tRNA synthetase with relaxed tRNA specificity since it is able to aspartylate not only its cognate tRNA(Asp) but also tRNA(Asn). Reaction proceeds in two steps: L-aspartate is first activated by ATP to form Asp-AMP and then transferred to the acceptor end of tRNA(Asp/Asn). The sequence is that of Aspartate--tRNA(Asp/Asn) ligase from Prosthecochloris aestuarii (strain DSM 271 / SK 413).